Here is an 899-residue protein sequence, read N- to C-terminus: UPF0182 protein Mhun_1303 (899 aa).

A run of 7 helical transmembrane segments spans residues 6 to 26 (LLIFIPAAVILLFFLLTDLLS), 39 to 59 (VFLTILITSAALFVIGTLLFF), 93 to 113 (VAAGITGLSLSSSWEIILAFL), 136 to 156 (LPFYTILIQYLLALFVFTLII), 196 to 216 (FLPQVNCLLFLIFTTLAAFLW), 240 to 260 (ITIPALTILTVIAFLIGLLFL), and 271 to 291 (IAYGIGGFFIIAILSAGAGFL).

The protein belongs to the UPF0182 family.

The protein localises to the cell membrane. This Methanospirillum hungatei JF-1 (strain ATCC 27890 / DSM 864 / NBRC 100397 / JF-1) protein is UPF0182 protein Mhun_1303.